A 174-amino-acid chain; its full sequence is Calcineurin subunit B (174 aa).

4 EF-hand domains span residues 21-56, 60-88, 90-125, and 131-166; these read EEIE…SSNP, RLMD…FSGK, SKLD…MVGK, and ELQQ…KSVA. 20 residues coordinate Ca(2+): D34, D36, S38, T40, E45, D66, D68, N70, T72, E77, D103, D105, D107, Y109, E114, D144, D146, D148, R150, and E155.

This sequence belongs to the calcineurin regulatory subunit family. Composed of a catalytic subunit (A) and a regulatory subunit (B).

Its function is as follows. Regulatory subunit of calcineurin, a calcium-dependent, calmodulin stimulated protein phosphatase. Confers calcium sensitivity. This Debaryomyces hansenii (strain ATCC 36239 / CBS 767 / BCRC 21394 / JCM 1990 / NBRC 0083 / IGC 2968) (Yeast) protein is Calcineurin subunit B (CNB1).